Reading from the N-terminus, the 375-residue chain is Platelet-derived growth factor receptor-like protein (375 aa).

The signal sequence occupies residues 1 to 21 (MKVWLLLGLLLVHEALEDVTG). The tract at residues 22 to 64 (QHLPKNKRPKEPGENRIKPTNKKVKPKIPKMKDRDSANSAPKT) is disordered. Basic residues predominate over residues 40–50 (PTNKKVKPKIP). The Ig-like C2-type 1 domain occupies 62-159 (PKTQSIMMQV…GYICRKDEAK (98 aa)). Cysteines 96 and 143 form a disulfide. Residues Asn-132 and Asn-219 are each glycosylated (N-linked (GlcNAc...) asparagine). Positions 272–375 (PSTTILASSN…TTVATTVEFS (104 aa)) constitute an Ig-like C2-type 2 domain. A disulfide bridge links Cys-293 with Cys-357.

Forms a complex composed of PDGFRL, TNK2 and GRB2. Expressed in colon, lung and liver.

The protein resides in the secreted. In Homo sapiens (Human), this protein is Platelet-derived growth factor receptor-like protein (PDGFRL).